A 564-amino-acid chain; its full sequence is Eukaryotic translation initiation factor 3 subunit L (564 aa).

In terms of domain architecture, PCI spans 331-537 (DAIRVFANIL…IHIADTKVAR (207 aa)).

The protein belongs to the eIF-3 subunit L family. As to quaternary structure, component of the eukaryotic translation initiation factor 3 (eIF-3) complex, which is composed of 13 subunits: EIF3A, EIF3B, EIF3C, EIF3D, EIF3E, EIF3F, EIF3G, EIF3H, EIF3I, EIF3J, EIF3K, EIF3L and EIF3M.

Its subcellular location is the cytoplasm. Its function is as follows. Component of the eukaryotic translation initiation factor 3 (eIF-3) complex, which is involved in protein synthesis of a specialized repertoire of mRNAs and, together with other initiation factors, stimulates binding of mRNA and methionyl-tRNAi to the 40S ribosome. The eIF-3 complex specifically targets and initiates translation of a subset of mRNAs involved in cell proliferation. In Gallus gallus (Chicken), this protein is Eukaryotic translation initiation factor 3 subunit L.